Consider the following 176-residue polypeptide: Large ribosomal subunit protein uL6 (176 aa).

The protein belongs to the universal ribosomal protein uL6 family. As to quaternary structure, part of the 50S ribosomal subunit.

This protein binds to the 23S rRNA, and is important in its secondary structure. It is located near the subunit interface in the base of the L7/L12 stalk, and near the tRNA binding site of the peptidyltransferase center. This is Large ribosomal subunit protein uL6 from Burkholderia lata (strain ATCC 17760 / DSM 23089 / LMG 22485 / NCIMB 9086 / R18194 / 383).